The primary structure comprises 559 residues: Protein aurora borealis (559 aa).

The segment at 1–27 is disordered; sequence MGDVKESKMQITPETPGRIPVLNPFES. A phosphoserine mark is found at Ser-183, Ser-191, Ser-270, Ser-325, and Ser-331. Thr-354 carries the phosphothreonine modification.

The protein belongs to the BORA family. Interacts with AURKA. Phosphorylated by AURKA.

Required for the activation of AURKA at the onset of mitosis. This Homo sapiens (Human) protein is Protein aurora borealis (BORA).